We begin with the raw amino-acid sequence, 227 residues long: Cytochrome c oxidase subunit 2 (227 aa).

Over Met1 to Ser14 the chain is Mitochondrial intermembrane. Residues Pro15–Met45 traverse the membrane as a helical segment. At Leu46–Gln59 the chain is on the mitochondrial matrix side. Residues Glu60–Met87 traverse the membrane as a helical segment. The Mitochondrial intermembrane portion of the chain corresponds to Asp88–Leu227. The Cu cation site is built by His161, Cys196, Glu198, Cys200, His204, and Met207. Glu198 contributes to the Mg(2+) binding site. Tyr218 is modified (phosphotyrosine).

The protein belongs to the cytochrome c oxidase subunit 2 family. In terms of assembly, component of the cytochrome c oxidase (complex IV, CIV), a multisubunit enzyme composed of 14 subunits. The complex is composed of a catalytic core of 3 subunits MT-CO1, MT-CO2 and MT-CO3, encoded in the mitochondrial DNA, and 11 supernumerary subunits COX4I, COX5A, COX5B, COX6A, COX6B, COX6C, COX7A, COX7B, COX7C, COX8 and NDUFA4, which are encoded in the nuclear genome. The complex exists as a monomer or a dimer and forms supercomplexes (SCs) in the inner mitochondrial membrane with NADH-ubiquinone oxidoreductase (complex I, CI) and ubiquinol-cytochrome c oxidoreductase (cytochrome b-c1 complex, complex III, CIII), resulting in different assemblies (supercomplex SCI(1)III(2)IV(1) and megacomplex MCI(2)III(2)IV(2)). Found in a complex with TMEM177, COA6, COX18, COX20, SCO1 and SCO2. Interacts with TMEM177 in a COX20-dependent manner. Interacts with COX20. Interacts with COX16. Requires Cu cation as cofactor.

Its subcellular location is the mitochondrion inner membrane. It carries out the reaction 4 Fe(II)-[cytochrome c] + O2 + 8 H(+)(in) = 4 Fe(III)-[cytochrome c] + 2 H2O + 4 H(+)(out). In terms of biological role, component of the cytochrome c oxidase, the last enzyme in the mitochondrial electron transport chain which drives oxidative phosphorylation. The respiratory chain contains 3 multisubunit complexes succinate dehydrogenase (complex II, CII), ubiquinol-cytochrome c oxidoreductase (cytochrome b-c1 complex, complex III, CIII) and cytochrome c oxidase (complex IV, CIV), that cooperate to transfer electrons derived from NADH and succinate to molecular oxygen, creating an electrochemical gradient over the inner membrane that drives transmembrane transport and the ATP synthase. Cytochrome c oxidase is the component of the respiratory chain that catalyzes the reduction of oxygen to water. Electrons originating from reduced cytochrome c in the intermembrane space (IMS) are transferred via the dinuclear copper A center (CU(A)) of subunit 2 and heme A of subunit 1 to the active site in subunit 1, a binuclear center (BNC) formed by heme A3 and copper B (CU(B)). The BNC reduces molecular oxygen to 2 water molecules using 4 electrons from cytochrome c in the IMS and 4 protons from the mitochondrial matrix. The polypeptide is Cytochrome c oxidase subunit 2 (MT-CO2) (Syncerus caffer (African buffalo)).